A 420-amino-acid polypeptide reads, in one-letter code: MSQLIDRRQNAGKKSTVNRQRFLRRYKSQIKKAVSEAVGKRSITEIDQGEQITIPAKDIYEPQFHRGHGGHIERVLPGNDNFIAGDRIKRPGGGAGGAGGNASDSGEGEDNFVFELSREEFLELYFEDLELPDLVKKELARISTYKTVRAGVTTSGIPNNINVLRSMKQATGRRVALASPYKKRLKEAEEELERLKQLTNPDKIDLLKLERDIEFFKKKIQTVPFIDTIDLRYNHRVRVPSPSTQAVMFCVMDVSGSMDEAKKDIAKRFFILLYMFLTKNYEKIELVFIRHHTSAKEVNEEEFFYSRETGGTVVSSALELLNTIIEARYPPQAWNIYVAQASDGDNWNADSPYCQELLQEKIMPLLQYFAYIEIMPRHHQSLWEVYQQVKERYPNFAMENIDNVADIYPVFRELFKRKTV.

The tract at residues 83–107 is disordered; the sequence is IAGDRIKRPGGGAGGAGGNASDSGE. Residues 91-100 are compositionally biased toward gly residues; the sequence is PGGGAGGAGG.

The protein belongs to the UPF0229 family.

This Legionella pneumophila (strain Corby) protein is UPF0229 protein LPC_3097.